The sequence spans 411 residues: Glutamate dehydrogenase 1, mitochondrial (411 aa).

A mitochondrion-targeting transit peptide spans 1–18 (MNALAATSRNFKQAAKLL). Lys102 is an active-site residue.

Belongs to the Glu/Leu/Phe/Val dehydrogenases family.

The protein localises to the mitochondrion. The enzyme catalyses L-glutamate + NAD(+) + H2O = 2-oxoglutarate + NH4(+) + NADH + H(+). The catalysed reaction is L-glutamate + NADP(+) + H2O = 2-oxoglutarate + NH4(+) + NADPH + H(+). In Oryza sativa subsp. indica (Rice), this protein is Glutamate dehydrogenase 1, mitochondrial (GDH1).